The following is a 536-amino-acid chain: Chaperonin GroEL (536 aa).

ATP is bound by residues threonine 30–proline 33, aspartate 86–threonine 90, glycine 414, and aspartate 494.

This sequence belongs to the chaperonin (HSP60) family. Forms a cylinder of 14 subunits composed of two heptameric rings stacked back-to-back. Interacts with the co-chaperonin GroES.

It localises to the cytoplasm. The catalysed reaction is ATP + H2O + a folded polypeptide = ADP + phosphate + an unfolded polypeptide.. In terms of biological role, together with its co-chaperonin GroES, plays an essential role in assisting protein folding. The GroEL-GroES system forms a nano-cage that allows encapsulation of the non-native substrate proteins and provides a physical environment optimized to promote and accelerate protein folding. In Methanosarcina barkeri (strain Fusaro / DSM 804), this protein is Chaperonin GroEL.